The primary structure comprises 501 residues: AKT kinase-transforming protein (501 aa).

The PH domain occupies 26-129 (AIVKEGWLHK…WATAIQTVAD (104 aa)). The interval 135–158 (EEETMDFRSGSPSDNSGAEEMEVS) is disordered. The 259-residue stretch at 171–429 (FEYLKLLGKG…AKEIMQHRFF (259 aa)) folds into the Protein kinase domain. ATP is bound by residues 177–185 (LGKGTFGKV) and Lys-200. Asp-295 (proton acceptor) is an active-site residue. Tyr-347 is modified (phosphotyrosine). The AGC-kinase C-terminal domain occupies 430–501 (ANIVWQDVYE…QFSYSASGTA (72 aa)). A disordered region spans residues 471-501 (TPPDQDDSMECVDSERRPHFPQFSYSASGTA).

It belongs to the protein kinase superfamily. AGC Ser/Thr protein kinase family. RAC subfamily. In terms of assembly, interacts with mouse THEM4. In terms of processing, autophosphorylated on threonine and serine residues.

The enzyme catalyses L-seryl-[protein] + ATP = O-phospho-L-seryl-[protein] + ADP + H(+). The catalysed reaction is L-threonyl-[protein] + ATP = O-phospho-L-threonyl-[protein] + ADP + H(+). The polypeptide is AKT kinase-transforming protein (V-AKT) (Mus musculus (Mouse)).